Reading from the N-terminus, the 392-residue chain is 1-deoxy-D-xylulose 5-phosphate reductoisomerase (392 aa).

NADPH-binding residues include Thr-14, Gly-15, Ser-16, Ile-17, Gly-40, Gln-43, and Asn-126. Lys-127 serves as a coordination point for 1-deoxy-D-xylulose 5-phosphate. Glu-128 lines the NADPH pocket. Mn(2+) is bound at residue Asp-150. Residues Ser-151, Glu-152, Ser-176, and His-199 each coordinate 1-deoxy-D-xylulose 5-phosphate. A Mn(2+)-binding site is contributed by Glu-152. Gly-205 is an NADPH binding site. 4 residues coordinate 1-deoxy-D-xylulose 5-phosphate: Ser-212, Asn-217, Lys-218, and Glu-221. Glu-221 contributes to the Mn(2+) binding site.

The protein belongs to the DXR family. Mg(2+) is required as a cofactor. It depends on Mn(2+) as a cofactor.

The enzyme catalyses 2-C-methyl-D-erythritol 4-phosphate + NADP(+) = 1-deoxy-D-xylulose 5-phosphate + NADPH + H(+). It functions in the pathway isoprenoid biosynthesis; isopentenyl diphosphate biosynthesis via DXP pathway; isopentenyl diphosphate from 1-deoxy-D-xylulose 5-phosphate: step 1/6. Its function is as follows. Catalyzes the NADPH-dependent rearrangement and reduction of 1-deoxy-D-xylulose-5-phosphate (DXP) to 2-C-methyl-D-erythritol 4-phosphate (MEP). The sequence is that of 1-deoxy-D-xylulose 5-phosphate reductoisomerase from Corynebacterium glutamicum (strain ATCC 13032 / DSM 20300 / JCM 1318 / BCRC 11384 / CCUG 27702 / LMG 3730 / NBRC 12168 / NCIMB 10025 / NRRL B-2784 / 534).